We begin with the raw amino-acid sequence, 481 residues long: Pre-mRNA-splicing factor sap114 (481 aa).

Over residues 1-15 the composition is skewed to polar residues; it reads MSSLMEFQDRNTTNN. Residues 1–34 form a disordered region; that stretch reads MSSLMEFQDRNTTNNETEHQKSITDQSSSVPAGV. SURP motif repeat units follow at residues 44-86 and 147-189; these read IIDK…HPYY and VLRL…YPYF. 2 disordered regions span residues 335–373 and 452–481; these read PSLA…QKPV and GVEI…NKRR. 2 stretches are compositionally biased toward polar residues: residues 345–368 and 467–481; these read ISST…TQPK and ATQS…NKRR.

In terms of assembly, belongs to the 40S cdc5-associated complex (or cwf complex), a spliceosome sub-complex reminiscent of a late-stage spliceosome composed of the U2, U5 and U6 snRNAs and at least brr2, cdc5, cwf2/prp3, cwf3/syf1, cwf4/syf3, cwf5/ecm2, spp42/cwf6, cwf7/spf27, cwf8, cwf9, cwf10, cwf11, cwf12, prp45/cwf13, cwf14, cwf15, cwf16, cwf17, cwf18, cwf19, cwf20, cwf21, cwf22, cwf23, cwf24, cwf25, cwf26, cyp7/cwf27, cwf28, cwf29/ist3, lea1, msl1, prp5/cwf1, prp10, prp12/sap130, prp17, prp22, sap61, sap62, sap114, sap145, slu7, smb1, smd1, smd3, smf1, smg1 and syf2.

Its subcellular location is the nucleus. Involved in pre-mRNA splicing. May be involved in endoplasmic reticulum-associated protein degradation (ERAD) and required for growth at low and high temperatures. The sequence is that of Pre-mRNA-splicing factor sap114 (sap114) from Schizosaccharomyces pombe (strain 972 / ATCC 24843) (Fission yeast).